A 121-amino-acid polypeptide reads, in one-letter code: Large ribosomal subunit protein eL18 (121 aa).

It belongs to the eukaryotic ribosomal protein eL18 family.

This Methanosphaerula palustris (strain ATCC BAA-1556 / DSM 19958 / E1-9c) protein is Large ribosomal subunit protein eL18.